We begin with the raw amino-acid sequence, 188 residues long: Elongation factor P (188 aa).

Lys-34 is subject to N6-(3,6-diaminohexanoyl)-5-hydroxylysine.

Belongs to the elongation factor P family. Post-translationally, may be beta-lysylated on the epsilon-amino group of Lys-34 by the combined action of EpmA and EpmB, and then hydroxylated on the C5 position of the same residue by EpmC (if this protein is present). Lysylation is critical for the stimulatory effect of EF-P on peptide-bond formation. The lysylation moiety may extend toward the peptidyltransferase center and stabilize the terminal 3-CCA end of the tRNA. Hydroxylation of the C5 position on Lys-34 may allow additional potential stabilizing hydrogen-bond interactions with the P-tRNA.

Its subcellular location is the cytoplasm. The protein operates within protein biosynthesis; polypeptide chain elongation. In terms of biological role, involved in peptide bond synthesis. Alleviates ribosome stalling that occurs when 3 or more consecutive Pro residues or the sequence PPG is present in a protein, possibly by augmenting the peptidyl transferase activity of the ribosome. Modification of Lys-34 is required for alleviation. The chain is Elongation factor P from Citrobacter koseri (strain ATCC BAA-895 / CDC 4225-83 / SGSC4696).